The primary structure comprises 131 residues: Small ribosomal subunit protein uS8 (131 aa).

Belongs to the universal ribosomal protein uS8 family. As to quaternary structure, part of the 30S ribosomal subunit. Contacts proteins S5 and S12.

In terms of biological role, one of the primary rRNA binding proteins, it binds directly to 16S rRNA central domain where it helps coordinate assembly of the platform of the 30S subunit. In Laribacter hongkongensis (strain HLHK9), this protein is Small ribosomal subunit protein uS8.